Consider the following 203-residue polypeptide: Ribonuclease HII (203 aa).

The RNase H type-2 domain occupies 18 to 203 (GHYAGVDEVG…SFRPVREALA (186 aa)). 3 residues coordinate a divalent metal cation: Asp24, Glu25, and Asp116.

The protein belongs to the RNase HII family. Mn(2+) is required as a cofactor. Mg(2+) serves as cofactor.

The protein localises to the cytoplasm. It carries out the reaction Endonucleolytic cleavage to 5'-phosphomonoester.. Endonuclease that specifically degrades the RNA of RNA-DNA hybrids. The sequence is that of Ribonuclease HII from Shewanella halifaxensis (strain HAW-EB4).